Here is an 869-residue protein sequence, read N- to C-terminus: Bifunctional uridylyltransferase/uridylyl-removing enzyme (869 aa).

Residues 1 to 332 are uridylyltransferase; the sequence is MTATPADRPD…QFDGEAVPVQ (332 aa). The interval 333–691 is uridylyl-removing; sequence LDAGFSLRRG…RRAVPDNDAL (359 aa). The HD domain maps to 450–572; it reads VDQHTLMVLR…VGTRERLDYL (123 aa). ACT domains lie at 692–771 and 798–869; these read EVFV…PSRR and RISL…LDPT.

The protein belongs to the GlnD family. Mg(2+) serves as cofactor.

It carries out the reaction [protein-PII]-L-tyrosine + UTP = [protein-PII]-uridylyl-L-tyrosine + diphosphate. It catalyses the reaction [protein-PII]-uridylyl-L-tyrosine + H2O = [protein-PII]-L-tyrosine + UMP + H(+). Its activity is regulated as follows. Uridylyltransferase (UTase) activity is inhibited by glutamine, while glutamine activates uridylyl-removing (UR) activity. In terms of biological role, modifies, by uridylylation and deuridylylation, the PII regulatory proteins (GlnB and homologs), in response to the nitrogen status of the cell that GlnD senses through the glutamine level. Under low glutamine levels, catalyzes the conversion of the PII proteins and UTP to PII-UMP and PPi, while under higher glutamine levels, GlnD hydrolyzes PII-UMP to PII and UMP (deuridylylation). Thus, controls uridylylation state and activity of the PII proteins, and plays an important role in the regulation of nitrogen assimilation and metabolism. The protein is Bifunctional uridylyltransferase/uridylyl-removing enzyme of Xanthomonas campestris pv. campestris (strain B100).